We begin with the raw amino-acid sequence, 307 residues long: Ribosomal protein L11 methyltransferase (307 aa).

The S-adenosyl-L-methionine site is built by T154, G178, D200, and N242.

It belongs to the methyltransferase superfamily. PrmA family.

It is found in the cytoplasm. The enzyme catalyses L-lysyl-[protein] + 3 S-adenosyl-L-methionine = N(6),N(6),N(6)-trimethyl-L-lysyl-[protein] + 3 S-adenosyl-L-homocysteine + 3 H(+). Functionally, methylates ribosomal protein L11. In Syntrophotalea carbinolica (strain DSM 2380 / NBRC 103641 / GraBd1) (Pelobacter carbinolicus), this protein is Ribosomal protein L11 methyltransferase.